Here is a 93-residue protein sequence, read N- to C-terminus: uncharacterized protein (93 aa).

Positions 36-69 (SEERLLSRLFEEMDELREAVEKEDWENLRDELLD) form a coiled coil.

This is an uncharacterized protein from Archaeoglobus fulgidus (strain ATCC 49558 / DSM 4304 / JCM 9628 / NBRC 100126 / VC-16).